Here is a 369-residue protein sequence, read N- to C-terminus: Serpentine receptor class epsilon-45 (369 aa).

8 helical membrane-spanning segments follow: residues 1–21 (MIFLIGNSTSNYTVCFPIFIL), 39–59 (FVLTFVSFYYVIKCCYVAIHI), 67–87 (TVLLIILMIQWFEGLLSNILI), 127–147 (FFLGGFLKWHYILSMITTLLV), 169–191 (GLFFMLVVGQTSTNLVMGYLFFF), 195–217 (HFAVGFSIILSTNIIAMGIFTYV), 258–278 (VIHAGLFLILTACFVNLFMYL), and 291–311 (IFESAINLNPVVIVPTLLGSV).

The protein belongs to the nematode receptor-like protein sre family.

The protein localises to the membrane. In Caenorhabditis elegans, this protein is Serpentine receptor class epsilon-45 (sre-45).